A 30-amino-acid polypeptide reads, in one-letter code: Protein ScvA (30 aa).

Positions methionine 1–arginine 30 are disordered.

Its function is as follows. Might be involved in DNA-binding; the protein binds DNA in gel-shift assays and immunogold electron microscopy shows labelling of condensed chromatin. The polypeptide is Protein ScvA (scvA) (Coxiella burnetii (strain RSA 493 / Nine Mile phase I)).